The following is a 323-amino-acid chain: Glucokinase (323 aa).

8–13 serves as a coordination point for ATP; the sequence is GDVGGT.

This sequence belongs to the bacterial glucokinase family.

It is found in the cytoplasm. The enzyme catalyses D-glucose + ATP = D-glucose 6-phosphate + ADP + H(+). The chain is Glucokinase from Yersinia enterocolitica serotype O:8 / biotype 1B (strain NCTC 13174 / 8081).